Consider the following 68-residue polypeptide: Amphipathic peptide VmCT1 (68 aa).

Positions 1 to 23 (MKTQFVILIVAVVLLQLISHSEA) are cleaved as a signal peptide. At Phe-36 the chain carries Phenylalanine amide. The propeptide occupies 40–68 (GLRNFDDLDDTFEPEMSEADLKYLQDLLR).

The protein belongs to the non-disulfide-bridged peptide (NDBP) superfamily. Short antimicrobial peptide (group 4) family. As to expression, expressed by the venom gland.

It is found in the secreted. The protein localises to the target cell membrane. Functionally, cationic amphipathic peptide with antibacterial activities against both Gram-positive and Gram-negative bacteria. Also shows antifungal activities. Is mildly hemolytic against human erythrocytes. In addition, when tested in vitro on the parasite Trypanosoma cruzi (responsible of the Chagas disease), is able to reduce the number of the three forms (epimastigote, trypomastigote and amastigote). Also shows antiplasmodial and cytotoxic activity (tested on Plasmodium gallinaceum, and MCF-7 breast cancer cell line). The polypeptide is Amphipathic peptide VmCT1 (Vaejovis mexicanus smithi (Mexican scorpion)).